The primary structure comprises 504 residues: One cut domain family member 2 (504 aa).

Disordered stretches follow at residues 29–95 (LGTL…GTAA), 166–189 (KFHHPHPHHHPHHHHHHHHQRLSG), 274–332 (EQHL…QLEE), and 485–504 (WQDDLSTGGSSSTSSTCTKA). The segment covering 35–56 (PAGGGSGGGGGGGGGGGGGGPG) has biased composition (gly residues). Residues 168 to 186 (HHPHPHHHPHHHHHHHHQR) show a composition bias toward basic residues. Residues 324–410 (VATSGQLEEI…QRMSALRLAA (87 aa)) constitute a DNA-binding region (CUT). Positions 426 to 485 (QKKSRLVFTDLQRRTLFAIFKENKRPSKEMQITISQQLGLELTTVSNFFMNARRRSLEKW) form a DNA-binding region, homeobox. The segment covering 490-504 (STGGSSSTSSTCTKA) has biased composition (low complexity).

The protein belongs to the CUT homeobox family.

The protein resides in the nucleus. In terms of biological role, transcriptional activator. Activates the transcription of a number of liver genes such as HNF3B. This chain is One cut domain family member 2 (ONECUT2), found in Homo sapiens (Human).